The sequence spans 285 residues: MANIRIIKRRIRSVRNIAKITRAMEMIAASKMKKAQERGLAGRPYSEKITEVIAALAALPQSGEILHPLLERRPVKKIAVLHITPDRGQCGGLVANINRKTGTFMLEQKIPVSAVVVGRKGVDFIRRIKQQMRAEFINLGDRPGYLDTLPISRVIMDDFMSGEIDQVFIAYTQFVTTAVQKPVLEQLLPVVPLELPPGQNLEYIYEPESATVLNSLLPRFVEMSVYHAILESIASEQSARMVAMRNATDNAKELIGELTLVYNKARQESITNELLDIVGGAAALA.

The protein belongs to the ATPase gamma chain family. F-type ATPases have 2 components, CF(1) - the catalytic core - and CF(0) - the membrane proton channel. CF(1) has five subunits: alpha(3), beta(3), gamma(1), delta(1), epsilon(1). CF(0) has three main subunits: a, b and c.

It localises to the cell membrane. Its function is as follows. Produces ATP from ADP in the presence of a proton gradient across the membrane. The gamma chain is believed to be important in regulating ATPase activity and the flow of protons through the CF(0) complex. The protein is ATP synthase gamma chain of Dehalococcoides mccartyi (strain ATCC BAA-2266 / KCTC 15142 / 195) (Dehalococcoides ethenogenes (strain 195)).